The primary structure comprises 81 residues: MKLIDLAKNIARELKEADEKYIIINGKKERILAIEIVQITSMPRFQIVTEKGTVLILTPSQFLRKKYELIKNGEKKSFFGV.

This is an uncharacterized protein from Sulfolobus islandicus filamentous virus (isolate Iceland/Hveragerdi) (SIFV).